Consider the following 144-residue polypeptide: Large ribosomal subunit protein uL16 (144 aa).

It belongs to the universal ribosomal protein uL16 family. In terms of assembly, part of the 50S ribosomal subunit.

Functionally, binds 23S rRNA and is also seen to make contacts with the A and possibly P site tRNAs. This Pediococcus pentosaceus (strain ATCC 25745 / CCUG 21536 / LMG 10740 / 183-1w) protein is Large ribosomal subunit protein uL16.